The following is a 135-amino-acid chain: Mini-ribonuclease 3 (135 aa).

The active site involves Asp17.

The protein belongs to the MrnC RNase family. In terms of assembly, homodimer. It depends on Mg(2+) as a cofactor.

Its subcellular location is the cytoplasm. Functionally, involved in correct processing of both the 5' and 3' ends of 23S rRNA precursor. Processes 30S rRNA precursor transcript even in absence of ribonuclease 3 (Rnc); Rnc processes 30S rRNA into smaller rRNA precursors. The protein is Mini-ribonuclease 3 of Bacillus cereus (strain ATCC 14579 / DSM 31 / CCUG 7414 / JCM 2152 / NBRC 15305 / NCIMB 9373 / NCTC 2599 / NRRL B-3711).